We begin with the raw amino-acid sequence, 330 residues long: Mitochondrial glycine transporter (330 aa).

Solcar repeat units lie at residues 11-94, 122-206, and 234-318; these read SSSY…LRQN, LSNL…LKKR, and TSAS…LIRR. 6 helical membrane passes run 17 to 42, 69 to 95, 128 to 153, 181 to 204, 238 to 264, and 293 to 311; these read FTAGLGSGILSAVLLQPADLLKTRLQ, GTVPSALRTGFGSAIYFTSLNALRQNV, LTTGAVARAGAGFVLMPMTIIKVRYE, GFGATAIRDAPYAGLYVLFYEQLK, INFGSGVLAAGLATAITNPFDAIKTRI, and GLGLRMGRKAVSSALAWTI.

It belongs to the mitochondrial carrier (TC 2.A.29) family. SLC25A38 subfamily.

It localises to the mitochondrion inner membrane. The catalysed reaction is glycine(in) = glycine(out). In terms of biological role, mitochondrial glycine transporter that imports glycine into the mitochondrial matrix. Plays an important role in providing glycine for the first enzymatic step in heme biosynthesis, the condensation of glycine with succinyl-CoA to produce 5-aminolevulinate (ALA) in the mitochondrial matrix. The chain is Mitochondrial glycine transporter from Sclerotinia sclerotiorum (strain ATCC 18683 / 1980 / Ss-1) (White mold).